We begin with the raw amino-acid sequence, 156 residues long: UPF0266 membrane protein YobD (156 aa).

At 1–5 (MTITD) the chain is on the periplasmic side. A helical transmembrane segment spans residues 6-26 (LVLILFIAALLAYALYDQFIM). Residues 27–44 (PRRNGPTLLSIALLRRGR) are Cytoplasmic-facing. A helical transmembrane segment spans residues 45-65 (VDSVIFVGLVAILIYNNVTSH). Residue Gly-66 is a topological domain, periplasmic. Residues 67-87 (AQMTTWLLSALALMGFYIFWI) traverse the membrane as a helical segment. Residues 88 to 156 (RTPRIIFKQR…LLIENQYLKI (69 aa)) are Cytoplasmic-facing.

Belongs to the UPF0266 family.

The protein localises to the cell inner membrane. The chain is UPF0266 membrane protein YobD (yobD) from Salmonella typhimurium (strain LT2 / SGSC1412 / ATCC 700720).